Reading from the N-terminus, the 259-residue chain is MIQIDALPAFSDNYIWLLQDTAKRRCAVVDPGDAGPVERWLAANPEWVLSDILVTHHHNDHVGGVERLRQLTGARVCGPANERIPGRDLALDEGDRVDVLGVTFQVLAVPGHTLGHIAFFSDQPATPILFSGDTLFAAGCGRMFEGTPEQMQPALARLAALPEQTAVYCAHEYTLSNLRFAKAVEPTNPHVQQRFEDVSRLRAENRISLPSTIGLERLTNPFLRTSETLVKQKADEWKGHSNTTHVAVFAALRSWKDTF.

Zn(2+)-binding residues include His56, His58, Asp60, His61, His112, Asp133, and His171.

Belongs to the metallo-beta-lactamase superfamily. Glyoxalase II family. Monomer. It depends on Zn(2+) as a cofactor.

The catalysed reaction is an S-(2-hydroxyacyl)glutathione + H2O = a 2-hydroxy carboxylate + glutathione + H(+). Its pathway is secondary metabolite metabolism; methylglyoxal degradation; (R)-lactate from methylglyoxal: step 2/2. In terms of biological role, thiolesterase that catalyzes the hydrolysis of S-D-lactoyl-glutathione to form glutathione and D-lactic acid. The protein is Hydroxyacylglutathione hydrolase of Pseudomonas putida (strain ATCC 700007 / DSM 6899 / JCM 31910 / BCRC 17059 / LMG 24140 / F1).